A 304-amino-acid polypeptide reads, in one-letter code: Carbonic anhydrase 5A, mitochondrial (304 aa).

A mitochondrion-targeting transit peptide spans 1–34 (MLRAKMLGRGPYKPLAILRHMGPLCATRPQHWRF). Residues 35-295 (QHSYAEKHSN…LRGRNVRSSF (261 aa)) enclose the Alpha-carbonic anhydrase domain. Residues His129, His131, and His154 each coordinate Zn(2+).

This sequence belongs to the alpha-carbonic anhydrase family. The cofactor is Zn(2+). In terms of tissue distribution, high in liver, also detected in heart, lung, kidney, spleen and intestine.

Its subcellular location is the mitochondrion. The catalysed reaction is hydrogencarbonate + H(+) = CO2 + H2O. Functionally, mitochondrial carbonic anhydrase that catalyzes the reversible conversion of carbon dioxide to bicarbonate/HCO3. Mitochondria are impermeable to HCO3, and thus this intramitochondrial carbonic anhydrase is pivotal in providing HCO3 for multiple mitochondrial enzymes that catalyze the formation of essential metabolites of intermediary metabolism in the urea and Krebs cycles. This is Carbonic anhydrase 5A, mitochondrial from Rattus norvegicus (Rat).